Here is a 463-residue protein sequence, read N- to C-terminus: L-seryl-tRNA(Sec) selenium transferase (463 aa).

Lysine 295 bears the N6-(pyridoxal phosphate)lysine mark.

Belongs to the SelA family. As to quaternary structure, homodecamer; pentamer of dimers. Binds only one seryl-tRNA(Sec) per dimer. It depends on pyridoxal 5'-phosphate as a cofactor.

The protein localises to the cytoplasm. It catalyses the reaction L-seryl-tRNA(Sec) + selenophosphate + H(+) = L-selenocysteinyl-tRNA(Sec) + phosphate. The protein operates within aminoacyl-tRNA biosynthesis; selenocysteinyl-tRNA(Sec) biosynthesis; selenocysteinyl-tRNA(Sec) from L-seryl-tRNA(Sec) (bacterial route): step 1/1. In terms of biological role, converts seryl-tRNA(Sec) to selenocysteinyl-tRNA(Sec) required for selenoprotein biosynthesis. The protein is L-seryl-tRNA(Sec) selenium transferase of Escherichia coli O139:H28 (strain E24377A / ETEC).